The following is a 425-amino-acid chain: Probable sucrose-phosphatase 3a (425 aa).

This sequence belongs to the sucrose phosphatase family. In terms of assembly, homodimer. Mg(2+) is required as a cofactor.

The catalysed reaction is sucrose 6(F)-phosphate + H2O = sucrose + phosphate. It participates in glycan biosynthesis; sucrose biosynthesis; sucrose from D-fructose 6-phosphate and UDP-alpha-D-glucose: step 2/2. In terms of biological role, catalyzes the final step of sucrose synthesis. The chain is Probable sucrose-phosphatase 3a (SPP3A) from Arabidopsis thaliana (Mouse-ear cress).